The following is a 354-amino-acid chain: tRNA N6-adenosine threonylcarbamoyltransferase (354 aa).

Positions 115 and 119 each coordinate Fe cation. Substrate is bound by residues Leu-138–Gly-142, Asp-171, Gly-184, and Asn-276. Residue Asp-304 participates in Fe cation binding.

This sequence belongs to the KAE1 / TsaD family. Fe(2+) is required as a cofactor.

It localises to the cytoplasm. It carries out the reaction L-threonylcarbamoyladenylate + adenosine(37) in tRNA = N(6)-L-threonylcarbamoyladenosine(37) in tRNA + AMP + H(+). Functionally, required for the formation of a threonylcarbamoyl group on adenosine at position 37 (t(6)A37) in tRNAs that read codons beginning with adenine. Is involved in the transfer of the threonylcarbamoyl moiety of threonylcarbamoyl-AMP (TC-AMP) to the N6 group of A37, together with TsaE and TsaB. TsaD likely plays a direct catalytic role in this reaction. The sequence is that of tRNA N6-adenosine threonylcarbamoyltransferase from Xanthomonas campestris pv. campestris (strain 8004).